Consider the following 584-residue polypeptide: Long-chain-fatty-acid--AMP ligase FadD23 (584 aa).

Helical transmembrane passes span 199–219 (YFAD…WLPF) and 225–245 (LVLG…TSPV).

Belongs to the ATP-dependent AMP-binding enzyme family.

The protein localises to the membrane. It carries out the reaction holo-[(hydroxy)phthioceranic acid synthase] + hexadecanoate + ATP = hexadecanoyl-[(hydroxy)phthioceranic acid synthase] + AMP + diphosphate. The catalysed reaction is holo-[(hydroxy)phthioceranic acid synthase] + octadecanoate + ATP = octadecanoyl-[(hydroxy)phthioceranic acid synthase] + AMP + diphosphate. It functions in the pathway lipid metabolism; fatty acid biosynthesis. Catalyzes the activation of long-chain fatty acids as acyl-adenylates (acyl-AMP), which are then transferred to the multifunctional polyketide synthase (PKS) type III for further chain extension. Involved in the biosynthesis of sulfolipid 1 (SL-1). In Mycobacterium bovis (strain ATCC BAA-935 / AF2122/97), this protein is Long-chain-fatty-acid--AMP ligase FadD23 (fadD23).